The sequence spans 132 residues: Replication enhancer protein (132 aa).

Belongs to the geminiviridae replication enhancer protein family. In terms of assembly, homooligomer. Interacts with the replication-associated protein (REP). Interacts with host proliferating cell nuclear antigen (PCNA). Interacts with host retinoblastoma-related protein 1 (RBR1), and may thereby deregulate the host cell cycle. Oligomerization and interaction with PCNA are necessary for optimal replication enhancement.

Its function is as follows. Increases viral DNA accumulation. Enhances infectivity and symptom expression. The chain is Replication enhancer protein from Solanum lycopersicum (Tomato).